The primary structure comprises 93 residues: UPF0473 protein BH1270 (93 aa).

This sequence belongs to the UPF0473 family.

In Halalkalibacterium halodurans (strain ATCC BAA-125 / DSM 18197 / FERM 7344 / JCM 9153 / C-125) (Bacillus halodurans), this protein is UPF0473 protein BH1270.